The chain runs to 159 residues: Cyclic pyranopterin monophosphate synthase (159 aa).

Substrate is bound by residues 76-78 and 114-115; these read LCH and ME. Residue aspartate 129 is part of the active site.

Belongs to the MoaC family. Homohexamer; trimer of dimers.

The enzyme catalyses (8S)-3',8-cyclo-7,8-dihydroguanosine 5'-triphosphate = cyclic pyranopterin phosphate + diphosphate. It participates in cofactor biosynthesis; molybdopterin biosynthesis. Catalyzes the conversion of (8S)-3',8-cyclo-7,8-dihydroguanosine 5'-triphosphate to cyclic pyranopterin monophosphate (cPMP). This is Cyclic pyranopterin monophosphate synthase from Shewanella oneidensis (strain ATCC 700550 / JCM 31522 / CIP 106686 / LMG 19005 / NCIMB 14063 / MR-1).